Here is a 581-residue protein sequence, read N- to C-terminus: Sodium/hydrogen exchanger 8 (581 aa).

The next 11 helical transmembrane spans lie at 60-80 (MTIF…HLLI), 84-104 (LHFL…GAVI), 123-143 (PNMF…YSLH), 156-176 (LFAV…IYFL), 191-211 (FAFG…IFNA), 264-284 (FLKM…ISAL), 311-331 (GLAE…GIVM), 354-374 (VAFL…FSFP), 379-399 (ISFV…NIFP), 417-437 (MFIM…SLHL), and 451-471 (TTIV…MPLI). The residue at position 510 (Thr-510) is a Phosphothreonine. Phosphoserine is present on residues Ser-571 and Ser-573.

It belongs to the monovalent cation:proton antiporter 1 (CPA1) transporter (TC 2.A.36) family. Ubiquitous. Strongly expressed in skeletal muscle and kidney. Detected throughout the entire gastrointestinal tract, with high expression detected in stomach, duodenum and ascending colon.

It localises to the golgi apparatus membrane. The protein localises to the golgi apparatus. The protein resides in the trans-Golgi network membrane. It is found in the endosome. Its subcellular location is the multivesicular body membrane. It localises to the apical cell membrane. The protein localises to the cytoplasmic vesicle. The protein resides in the secretory vesicle. It is found in the acrosome. The catalysed reaction is Na(+)(in) + H(+)(out) = Na(+)(out) + H(+)(in). With respect to regulation, HOE642 inhibits SLC9A8 activity. In terms of biological role, na(+)/H(+) antiporter. Mediates the electoneutral exchange of intracellular H(+) ions for extracellular Na(+) in 1:1 stoichiometry. Acts as an Na(+)/H(+) exchanger in the trans-Golgi. Contributes to the regulation of pH regulation of Golgi apparatus, and consequently, in protein trafficking and endosomal morphology. In germ cells, plays a crucial role in acrosome biogenesis and sperm development, probably by playing a role in the fusion of the Golgi-derived vesicles that form the acrosomal cap. Can also be active at the cell surface of specialized cells. In the small intestine, at the cell membrane, plays a major physiological role in transepithelial absorption of Na(+) and regulates intracellular pH homeostasis of intestinal epithelial cells. Acts as an important regulator of mucosal integrity in the intestine and in the stomach, could mediate the pH fluctuation necessary for mucin exocytosis or assist membrane trafficking of other proteins. Plays a role in photoreceptor survival and in the maintenance of intracellular pH homeostasis in retinal pigment epithelium (RPE cells). In Homo sapiens (Human), this protein is Sodium/hydrogen exchanger 8.